We begin with the raw amino-acid sequence, 804 residues long: Protein-lysine N-methyltransferase SMYD4 (804 aa).

112–114 serves as a coordination point for S-adenosyl-L-methionine; the sequence is RSA. The SET domain occupies 233 to 574; sequence SSIGLCVDPL…KGQEILHCYG (342 aa). 8 residues coordinate Zn(2+): cysteine 296, cysteine 299, cysteine 309, cysteine 312, cysteine 318, cysteine 322, histidine 331, and cysteine 335. An MYND-type zinc finger spans residues 296-335; the sequence is CHRCLKHTLATVPCDGCSYAKYCSQECLQQAWELYHRTEC. Residues asparagine 427, 539 to 540, tyrosine 573, and phenylalanine 595 contribute to the S-adenosyl-L-methionine site; that span reads NH.

This sequence belongs to the class V-like SAM-binding methyltransferase superfamily. Interacts (via MYND-type zinc finger) with HDAC1.

The protein localises to the nucleus. It is found in the cytoplasm. It carries out the reaction L-lysyl-[protein] + S-adenosyl-L-methionine = N(6)-methyl-L-lysyl-[protein] + S-adenosyl-L-homocysteine + H(+). Functionally, protein-lysine N-methyltransferase. Monomethylates PRMT5, modulating its transcriptional activity. May also act as a histone methyltransferase. Plays a critical role in cardiac development. Acts as a key epigenetic regulator of gene expression during cardiac development via its dual activities as a methyltransferase and negative regulator of HDAC1. The chain is Protein-lysine N-methyltransferase SMYD4 from Homo sapiens (Human).